A 513-amino-acid polypeptide reads, in one-letter code: Histidine ammonia-lyase (513 aa).

Positions 143–145 (ASG) form a cross-link, 5-imidazolinone (Ala-Gly). The residue at position 144 (serine 144) is a 2,3-didehydroalanine (Ser).

It belongs to the PAL/histidase family. In terms of processing, contains an active site 4-methylidene-imidazol-5-one (MIO), which is formed autocatalytically by cyclization and dehydration of residues Ala-Ser-Gly.

It is found in the cytoplasm. It carries out the reaction L-histidine = trans-urocanate + NH4(+). Its pathway is amino-acid degradation; L-histidine degradation into L-glutamate; N-formimidoyl-L-glutamate from L-histidine: step 1/3. This Xanthomonas campestris pv. campestris (strain B100) protein is Histidine ammonia-lyase.